Consider the following 172-residue polypeptide: 3-hydroxydecanoyl-[acyl-carrier-protein] dehydratase (172 aa).

His-71 is a catalytic residue.

This sequence belongs to the thioester dehydratase family. FabA subfamily. In terms of assembly, homodimer.

The protein resides in the cytoplasm. It carries out the reaction a (3R)-hydroxyacyl-[ACP] = a (2E)-enoyl-[ACP] + H2O. The catalysed reaction is (3R)-hydroxydecanoyl-[ACP] = (2E)-decenoyl-[ACP] + H2O. It catalyses the reaction (2E)-decenoyl-[ACP] = (3Z)-decenoyl-[ACP]. The protein operates within lipid metabolism; fatty acid biosynthesis. Its function is as follows. Necessary for the introduction of cis unsaturation into fatty acids. Catalyzes the dehydration of (3R)-3-hydroxydecanoyl-ACP to E-(2)-decenoyl-ACP and then its isomerization to Z-(3)-decenoyl-ACP. Can catalyze the dehydratase reaction for beta-hydroxyacyl-ACPs with saturated chain lengths up to 16:0, being most active on intermediate chain length. The polypeptide is 3-hydroxydecanoyl-[acyl-carrier-protein] dehydratase (Salmonella arizonae (strain ATCC BAA-731 / CDC346-86 / RSK2980)).